We begin with the raw amino-acid sequence, 497 residues long: Di-/tripeptide transporter (497 aa).

A run of 12 helical transmembrane segments spans residues 3 to 23 (AILL…MSQT), 26 to 46 (ASIM…GGWL), 57 to 77 (VFYG…PAGV), 84 to 104 (IALI…MVGG), 119 to 139 (IFVF…PWAA), 155 to 175 (AGFS…VLGG), 199 to 219 (IKWV…MAGV), 227 to 247 (VITL…VMMF), 294 to 314 (FIIL…KVII), 321 to 341 (LVLL…TFVL), 372 to 392 (GIEI…LIIL), and 452 to 472 (IVII…WSYI).

The protein belongs to the major facilitator superfamily. Proton-dependent oligopeptide transporter (POT/PTR) (TC 2.A.17) family.

Its subcellular location is the cell membrane. Its function is as follows. Proton-dependent uptake of di- or tri-peptides. The protein is Di-/tripeptide transporter (dtpT) of Lactobacillus helveticus (Lactobacillus suntoryeus).